The chain runs to 108 residues: Large ribosomal subunit protein uL24 (108 aa).

It belongs to the universal ribosomal protein uL24 family. In terms of assembly, part of the 50S ribosomal subunit.

In terms of biological role, one of two assembly initiator proteins, it binds directly to the 5'-end of the 23S rRNA, where it nucleates assembly of the 50S subunit. Its function is as follows. One of the proteins that surrounds the polypeptide exit tunnel on the outside of the subunit. The chain is Large ribosomal subunit protein uL24 from Frankia casuarinae (strain DSM 45818 / CECT 9043 / HFP020203 / CcI3).